Here is a 249-residue protein sequence, read N- to C-terminus: Probable septum site-determining protein MinC (249 aa).

The interval 116–149 (AAVSPPPPPPPPPARAEPAAPVARPAPGRMQRNA) is disordered. The span at 119–130 (SPPPPPPPPPAR) shows a compositional bias: pro residues. A compositionally biased stretch (low complexity) spans 131 to 142 (AEPAAPVARPAP).

It belongs to the MinC family. As to quaternary structure, interacts with MinD and FtsZ.

Cell division inhibitor that blocks the formation of polar Z ring septums. Rapidly oscillates between the poles of the cell to destabilize FtsZ filaments that have formed before they mature into polar Z rings. Prevents FtsZ polymerization. The chain is Probable septum site-determining protein MinC from Xanthomonas campestris pv. campestris (strain B100).